Reading from the N-terminus, the 376-residue chain is 23S rRNA (uracil(747)-C(5))-methyltransferase RlmC (376 aa).

The [4Fe-4S] cluster site is built by Cys-3, Cys-11, Cys-14, and Cys-87. 4 residues coordinate S-adenosyl-L-methionine: Gln-212, Phe-241, Glu-262, and Asn-307. Cys-334 serves as the catalytic Nucleophile.

The protein belongs to the class I-like SAM-binding methyltransferase superfamily. RNA M5U methyltransferase family. RlmC subfamily.

The enzyme catalyses uridine(747) in 23S rRNA + S-adenosyl-L-methionine = 5-methyluridine(747) in 23S rRNA + S-adenosyl-L-homocysteine + H(+). Functionally, catalyzes the formation of 5-methyl-uridine at position 747 (m5U747) in 23S rRNA. In Yersinia pseudotuberculosis serotype I (strain IP32953), this protein is 23S rRNA (uracil(747)-C(5))-methyltransferase RlmC.